The following is a 292-amino-acid chain: Phosphoribulokinase, plasmid (292 aa).

Position 12 to 20 (12 to 20 (GSSGAGTTS)) interacts with ATP.

It belongs to the phosphoribulokinase family. In terms of assembly, homooctamer.

It catalyses the reaction D-ribulose 5-phosphate + ATP = D-ribulose 1,5-bisphosphate + ADP + H(+). It functions in the pathway carbohydrate biosynthesis; Calvin cycle. This chain is Phosphoribulokinase, plasmid (cfxP), found in Cupriavidus necator (strain ATCC 17699 / DSM 428 / KCTC 22496 / NCIMB 10442 / H16 / Stanier 337) (Ralstonia eutropha).